A 97-amino-acid polypeptide reads, in one-letter code: Co-chaperonin GroES (97 aa).

The protein belongs to the GroES chaperonin family. In terms of assembly, heptamer of 7 subunits arranged in a ring. Interacts with the chaperonin GroEL.

It is found in the cytoplasm. Together with the chaperonin GroEL, plays an essential role in assisting protein folding. The GroEL-GroES system forms a nano-cage that allows encapsulation of the non-native substrate proteins and provides a physical environment optimized to promote and accelerate protein folding. GroES binds to the apical surface of the GroEL ring, thereby capping the opening of the GroEL channel. This Buchnera aphidicola subsp. Pemphigus spyrothecae protein is Co-chaperonin GroES.